The primary structure comprises 345 residues: Krueppel-like factor 3 (345 aa).

The tract at residues methionine 1–serine 74 is repressor domain. Lysine 10 participates in a covalent cross-link: Glycyl lysine isopeptide (Lys-Gly) (interchain with G-Cter in SUMO). The short motif at glutamate 60–lysine 68 is the 9aaTAD; inactive element. A CTBP-binding motif motif is present at residues proline 61–threonine 65. The tract at residues valine 66 to proline 112 is disordered. Residue lysine 68 forms a Glycyl lysine isopeptide (Lys-Gly) (interchain with G-Cter in SUMO2) linkage. Composition is skewed to low complexity over residues serine 70 to serine 81 and serine 92 to serine 108. 5 positions are modified to phosphoserine: serine 71, serine 92, serine 101, serine 108, and serine 111. Residues lysine 196 and lysine 198 each participate in a glycyl lysine isopeptide (Lys-Gly) (interchain with G-Cter in SUMO2) cross-link. Phosphoserine is present on residues serine 216, serine 224, and serine 250. C2H2-type zinc fingers lie at residues histidine 260–histidine 284, tyrosine 290–histidine 314, and phenylalanine 320–histidine 342.

The protein belongs to the krueppel C2H2-type zinc-finger protein family. Monomer. Sumoylated with SUMO1. Sumoylation is enhanced by PIAS1, PIAS2alpha and PIAS2beta, and PIAS4, but not by Pc2. Enhances transcriptional repression, but has no effect on DNA binding. Sumoylation on Lys-198 is the major site.

It localises to the nucleus. Its function is as follows. Binds to the CACCC box of erythroid cell-expressed genes. May play a role in hematopoiesis. The protein is Krueppel-like factor 3 (KLF3) of Homo sapiens (Human).